A 406-amino-acid polypeptide reads, in one-letter code: Cytochrome P450 165C4 (406 aa).

A heme-binding site is contributed by Cys356.

The protein belongs to the cytochrome P450 family. Requires heme as cofactor.

It functions in the pathway antibiotic biosynthesis; vancomycin biosynthesis. In terms of biological role, involved in the coupling of aromatic side chains of the heptapeptide of vancomycin. The sequence is that of Cytochrome P450 165C4 (cyp165C4) from Amycolatopsis orientalis (Nocardia orientalis).